We begin with the raw amino-acid sequence, 503 residues long: Glutamyl-tRNA(Gln) amidotransferase subunit A (503 aa).

Catalysis depends on charge relay system residues K79 and S154. The Acyl-ester intermediate role is filled by S178.

Belongs to the amidase family. GatA subfamily. Heterotrimer of A, B and C subunits.

The enzyme catalyses L-glutamyl-tRNA(Gln) + L-glutamine + ATP + H2O = L-glutaminyl-tRNA(Gln) + L-glutamate + ADP + phosphate + H(+). Functionally, allows the formation of correctly charged Gln-tRNA(Gln) through the transamidation of misacylated Glu-tRNA(Gln) in organisms which lack glutaminyl-tRNA synthetase. The reaction takes place in the presence of glutamine and ATP through an activated gamma-phospho-Glu-tRNA(Gln). This chain is Glutamyl-tRNA(Gln) amidotransferase subunit A, found in Agathobacter rectalis (strain ATCC 33656 / DSM 3377 / JCM 17463 / KCTC 5835 / VPI 0990) (Eubacterium rectale).